Reading from the N-terminus, the 369-residue chain is Phosphoribosyl pyrophosphate synthase-associated protein 2 (369 aa).

Methionine 1 is subject to N-acetylmethionine. A phosphoserine mark is found at serine 219, serine 227, and serine 233.

It belongs to the ribose-phosphate pyrophosphokinase family. Binds to PRPS1 and PRPS2.

Functionally, seems to play a negative regulatory role in 5-phosphoribose 1-diphosphate synthesis. The sequence is that of Phosphoribosyl pyrophosphate synthase-associated protein 2 (PRPSAP2) from Bos taurus (Bovine).